A 203-amino-acid polypeptide reads, in one-letter code: ATP-dependent Clp protease proteolytic subunit (203 aa).

Ser103 functions as the Nucleophile in the catalytic mechanism. His128 is an active-site residue.

The protein belongs to the peptidase S14 family. As to quaternary structure, fourteen ClpP subunits assemble into 2 heptameric rings which stack back to back to give a disk-like structure with a central cavity, resembling the structure of eukaryotic proteasomes.

It localises to the cytoplasm. It catalyses the reaction Hydrolysis of proteins to small peptides in the presence of ATP and magnesium. alpha-casein is the usual test substrate. In the absence of ATP, only oligopeptides shorter than five residues are hydrolyzed (such as succinyl-Leu-Tyr-|-NHMec, and Leu-Tyr-Leu-|-Tyr-Trp, in which cleavage of the -Tyr-|-Leu- and -Tyr-|-Trp bonds also occurs).. Its function is as follows. Cleaves peptides in various proteins in a process that requires ATP hydrolysis. Has a chymotrypsin-like activity. Plays a major role in the degradation of misfolded proteins. This Dichelobacter nodosus (strain VCS1703A) protein is ATP-dependent Clp protease proteolytic subunit.